Here is a 234-residue protein sequence, read N- to C-terminus: Sugar fermentation stimulation protein homolog (234 aa).

The protein belongs to the SfsA family.

This Shewanella sp. (strain MR-7) protein is Sugar fermentation stimulation protein homolog.